The sequence spans 338 residues: tRNA N6-adenosine threonylcarbamoyltransferase (338 aa).

The Fe cation site is built by H111 and H115. Substrate contacts are provided by residues 134–138 (LLSGG), D167, G180, and N275. D304 is a Fe cation binding site.

Belongs to the KAE1 / TsaD family. Fe(2+) serves as cofactor.

It localises to the cytoplasm. It catalyses the reaction L-threonylcarbamoyladenylate + adenosine(37) in tRNA = N(6)-L-threonylcarbamoyladenosine(37) in tRNA + AMP + H(+). Functionally, required for the formation of a threonylcarbamoyl group on adenosine at position 37 (t(6)A37) in tRNAs that read codons beginning with adenine. Is involved in the transfer of the threonylcarbamoyl moiety of threonylcarbamoyl-AMP (TC-AMP) to the N6 group of A37, together with TsaE and TsaB. TsaD likely plays a direct catalytic role in this reaction. The polypeptide is tRNA N6-adenosine threonylcarbamoyltransferase (Leptospira borgpetersenii serovar Hardjo-bovis (strain JB197)).